A 799-amino-acid polypeptide reads, in one-letter code: Transcriptional activator FLO8 (799 aa).

Over residues 1 to 10 (MSYKVNSSYP) the composition is skewed to polar residues. Disordered stretches follow at residues 1-20 (MSYKVNSSYPDSIPPTEQPY), 37-68 (TNSEQQRQQQQQQQQQQQQWINQPTAENSDLK), 101-127 (AHLDRDKGQNPVDGPKSKENNGNQNTF), 255-406 (TTGA…RVNK), 431-503 (NSKS…SVIL), 568-622 (ESGK…PHGF), 644-691 (VSQE…YDFD), and 705-758 (AYAS…NENQ). A compositionally biased stretch (low complexity) spans 41–55 (QQRQQQQQQQQQQQQ). In terms of domain architecture, LisH spans 73 to 105 (CKNTLNEYIFDFLTKSSLKNTAAAFAQDAHLDR). Positions 270-285 (DFTNVGPTQNRSQNVT) are enriched in polar residues. Residues 307–317 (NNNTTNNTTNN) show a composition bias toward low complexity. Residues 318 to 340 (KSPVNQPKSLKTMHSTDKPNNVP) show a composition bias toward polar residues. The span at 341–353 (TSKSTRSRSATSK) shows a compositional bias: low complexity. Over residues 354–370 (AKGKVKAGLVAKRRRKN) the composition is skewed to basic residues. Composition is skewed to polar residues over residues 371–396 (NTATVSAGSTNACSPNITTPGSTTSE) and 460–480 (KASTSAFPVESTNKLGGNSVV). A compositionally biased stretch (basic residues) spans 482 to 497 (GKKRSPPNTRVSRRKS). Polar residues-rich tracts occupy residues 584–593 (SKVSASSPLS) and 660–675 (GNDSRSSKGNRNTLST).

The protein belongs to the FLO8 family.

It is found in the nucleus. In terms of biological role, required for diploid filamentous growth, haploid invasive growth and flocculation. Putative transcriptional activator of FLO1. The sequence is that of Transcriptional activator FLO8 (FLO8) from Saccharomyces cerevisiae (strain ATCC 204508 / S288c) (Baker's yeast).